The sequence spans 395 residues: uncharacterized protein (395 aa).

A disordered region spans residues 115 to 144 (TKPPTEGGPEKDQSSPSQTQAAPQGPSTAS). Over residues 128–141 (SSPSQTQAAPQGPS) the composition is skewed to low complexity.

This is an uncharacterized protein from Homo sapiens (Human).